The chain runs to 168 residues: Cell division inhibitor SulA (168 aa).

The ftsZ binding stretch occupies residues 106 to 112 (ALLTGNY). The tract at residues 161 to 168 (KIHSSLYH) is lon protease binding.

The protein belongs to the SulA family. Interacts with FtsZ. In terms of processing, is rapidly cleaved and degraded by the Lon protease once DNA damage is repaired.

Component of the SOS system and an inhibitor of cell division. Accumulation of SulA causes rapid cessation of cell division and the appearance of long, non-septate filaments. In the presence of GTP, binds a polymerization-competent form of FtsZ in a 1:1 ratio, thus inhibiting FtsZ polymerization and therefore preventing it from participating in the assembly of the Z ring. This mechanism prevents the premature segregation of damaged DNA to daughter cells during cell division. The sequence is that of Cell division inhibitor SulA from Yersinia enterocolitica serotype O:8 / biotype 1B (strain NCTC 13174 / 8081).